A 101-amino-acid polypeptide reads, in one-letter code: Iron-sulfur cluster assembly protein CyaY (101 aa).

This sequence belongs to the frataxin family.

Its function is as follows. Involved in iron-sulfur (Fe-S) cluster assembly. May act as a regulator of Fe-S biogenesis. In Actinobacillus pleuropneumoniae serotype 5b (strain L20), this protein is Iron-sulfur cluster assembly protein CyaY.